The primary structure comprises 792 residues: DEAD-box ATP-dependent RNA helicase 40 (792 aa).

Low complexity predominate over residues 1–16 (MSAGTAPAAPRYAPDD). 2 disordered regions span residues 1–25 (MSAG…PWRG) and 44–118 (TQYE…PLPA). The region spanning 17–51 (PSLPKPWRGLVDGTTGYLYYWNPETNITQYEKPLP) is the WW domain. A compositionally biased stretch (pro residues) spans 52–68 (PEDQLPPPPPLPPPPPR). Composition is skewed to basic and acidic residues over residues 70–80 (GRGDRDRDRRD) and 88–108 (PRRD…DHRS). The short motif at 150–178 (TSFETGGFPPEILKEIQRAGFSSPTPIQA) is the Q motif element. The Helicase ATP-binding domain occupies 181–355 (WPIALQCQDV…EDLLVHPVQV (175 aa)). 194–201 (AKTGSGKT) is a binding site for ATP. A DEAD box motif is present at residues 303 to 306 (DEAD). Residues 384–528 (RLEQILRSQD…RVPRDLADMA (145 aa)) enclose the Helicase C-terminal domain. The interval 523 to 792 (DLADMASRGG…NATVQNGGDN (270 aa)) is disordered. Composition is skewed to basic and acidic residues over residues 543–560 (TRSD…RYGG) and 572–588 (DSSR…DGRS). 2 stretches are compositionally biased toward basic residues: residues 589-599 (RRSGRGRSRSR) and 609-654 (RSPK…RRHE). Positions 668–708 (GHGERKRTPEADPSRNHTNHSDPKDDRHPEDGKVGKVDLDR) are enriched in basic and acidic residues. Residues 725-739 (GKTSRSVSPGNQVEG) are compositionally biased toward polar residues. Acidic residues predominate over residues 764–777 (DEEEGMIDEDGEIA).

This sequence belongs to the DEAD box helicase family. DDX5/DBP2 subfamily.

It localises to the nucleus. The catalysed reaction is ATP + H2O = ADP + phosphate + H(+). ATP-dependent RNA helicase involved nonsense-mediated mRNA decay and ribosome biogenesis through rRNA processing. The chain is DEAD-box ATP-dependent RNA helicase 40 from Oryza sativa subsp. japonica (Rice).